A 283-amino-acid polypeptide reads, in one-letter code: E3 ubiquitin-protein ligase SGR9, amyloplastic (283 aa).

Residues 1–32 (MEDENTTIIMASLSALSPSHLTNLTHSILSIS) constitute an amyloplast transit peptide. An RING-type; atypical zinc finger spans residues 214–255 (CVICKEEMSEGRDVCEMPCQHFFHWKCILPWLSKKNTCPFCR).

Post-translationally, auto-ubiquitinated as part of the enzymatic reaction. In terms of tissue distribution, expressed in seedlings, hypocotyls, roots and stems. Present especially in hypocotyl and inflorescence endodermis, as well as in root cap columella, tissues that act as statocytes.

The protein localises to the plastid. It localises to the amyloplast. The catalysed reaction is S-ubiquitinyl-[E2 ubiquitin-conjugating enzyme]-L-cysteine + [acceptor protein]-L-lysine = [E2 ubiquitin-conjugating enzyme]-L-cysteine + N(6)-ubiquitinyl-[acceptor protein]-L-lysine.. It functions in the pathway protein modification; protein ubiquitination. Functionally, E3 ubiquitin-protein ligase which accepts ubiquitin from an E2 ubiquitin-conjugating enzyme in the form of a thioester and then directly transfers the ubiquitin to targeted substrates. Modulates amyloplast dynamics and sedimentation in statocytes during inflorescence, hypocotyl and root gravitropism, probably by regulating amyloplast interaction with actin filaments (AFs) in endodermal cells. The protein is E3 ubiquitin-protein ligase SGR9, amyloplastic (SGR9) of Arabidopsis thaliana (Mouse-ear cress).